The following is a 138-amino-acid chain: Small ribosomal subunit protein uS11c (138 aa).

The interval 1 to 24 (MAKAIPRSGSRRSGRIGSRKSTRR) is disordered. Residues 9 to 24 (GSRRSGRIGSRKSTRR) show a composition bias toward basic residues.

Belongs to the universal ribosomal protein uS11 family. In terms of assembly, part of the 30S ribosomal subunit.

It is found in the plastid. It localises to the chloroplast. The chain is Small ribosomal subunit protein uS11c from Panax ginseng (Korean ginseng).